The following is a 241-amino-acid chain: Ureidoacrylate amidohydrolase RutB (241 aa).

Asp-38 functions as the Proton acceptor in the catalytic mechanism. Lys-147 is an active-site residue. Cys-180 acts as the Nucleophile in catalysis.

The protein belongs to the isochorismatase family. RutB subfamily.

It carries out the reaction (Z)-3-ureidoacrylate + H2O + H(+) = (Z)-3-aminoacrylate + NH4(+) + CO2. The enzyme catalyses (Z)-3-ureidoacrylate + H2O = (Z)-3-aminoacrylate + carbamate + H(+). The catalysed reaction is (Z)-2-methylureidoacrylate + H2O + H(+) = (Z)-2-methylaminoacrylate + NH4(+) + CO2. Its function is as follows. Hydrolyzes ureidoacrylate to form aminoacrylate and carbamate. The carbamate hydrolyzes spontaneously, thereby releasing one of the nitrogen atoms of the pyrimidine ring as ammonia and one of its carbon atoms as CO2. The protein is Ureidoacrylate amidohydrolase RutB of Haliangium ochraceum (strain DSM 14365 / JCM 11303 / SMP-2).